A 122-amino-acid chain; its full sequence is UPF0102 protein Krad_1407 (122 aa).

The protein belongs to the UPF0102 family.

The polypeptide is UPF0102 protein Krad_1407 (Kineococcus radiotolerans (strain ATCC BAA-149 / DSM 14245 / SRS30216)).